The sequence spans 238 residues: Large ribosomal subunit protein uL2 (238 aa).

Disordered stretches follow at residues 1–34 (MGKR…PPLS) and 197–238 (VDHP…RRKR). Basic residues predominate over residues 224–238 (KVGHIAARRTGRRKR).

It belongs to the universal ribosomal protein uL2 family. In terms of assembly, part of the 50S ribosomal subunit. Forms a bridge to the 30S subunit in the 70S ribosome.

Functionally, one of the primary rRNA binding proteins. Required for association of the 30S and 50S subunits to form the 70S ribosome, for tRNA binding and peptide bond formation. It has been suggested to have peptidyltransferase activity; this is somewhat controversial. Makes several contacts with the 16S rRNA in the 70S ribosome. The chain is Large ribosomal subunit protein uL2 from Aeropyrum pernix (strain ATCC 700893 / DSM 11879 / JCM 9820 / NBRC 100138 / K1).